The following is a 214-amino-acid chain: Cytochrome b (214 aa).

4 helical membrane passes run 31–51 (FGSM…FLAI), 75–96 (WIMQ…YIHI), 111–131 (WLSG…GYVL), and 176–196 (FFAL…AHIL). Heme b is bound by residues Xaa-81 and His-95. Heme b-binding residues include His-180 and His-194. An a ubiquinone-binding site is contributed by His-199.

Belongs to the cytochrome b family. As to quaternary structure, the cytochrome bc1 complex contains 3 respiratory subunits (MT-CYB, CYC1 and UQCRFS1), 2 core proteins (UQCRC1 and UQCRC2) and probably 6 low-molecular weight proteins. Heme b serves as cofactor.

Its subcellular location is the mitochondrion inner membrane. In terms of biological role, component of the ubiquinol-cytochrome c reductase complex (complex III or cytochrome b-c1 complex) that is part of the mitochondrial respiratory chain. The b-c1 complex mediates electron transfer from ubiquinol to cytochrome c. Contributes to the generation of a proton gradient across the mitochondrial membrane that is then used for ATP synthesis. The polypeptide is Cytochrome b (MT-CYB) (Bothriechis schlegelii (Eyelash palm pitviper)).